We begin with the raw amino-acid sequence, 49 residues long: Large ribosomal subunit protein bL33 (49 aa).

The protein belongs to the bacterial ribosomal protein bL33 family.

This chain is Large ribosomal subunit protein bL33, found in Carboxydothermus hydrogenoformans (strain ATCC BAA-161 / DSM 6008 / Z-2901).